The sequence spans 170 residues: Calcineurin subunit B type 1 (170 aa).

4 consecutive EF-hand domains span residues 18–46, 50–85, 87–122, and 128–163; these read DEIRRLGKRFRKLDLDNSGALSIDEFMSL, QQNPLVQRVIDIFDADGNGEVDFKEFIQGVSQFSVR, DKLSKLRFAFRIYDMDNDGYISNGELFQVLKMMVGN, and QLQQIVDKTICFADKDEDGKISFDEFCSVVGNTDIH. Ca(2+)-binding residues include Asp31, Asp33, Ser35, Glu42, Asp63, Asp65, Asn67, Glu69, Glu74, Asp100, Asp102, Asp104, Tyr106, Glu111, Asp141, Asp143, Asp145, Lys147, and Glu152.

The protein belongs to the calcineurin regulatory subunit family. In terms of assembly, composed of two components (A and B), the A component is the catalytic subunit and the B component confers calcium sensitivity.

In terms of biological role, calcineurin is a calcium-binding and calmodulin-binding protein found in all cells from yeast to mammals, and a calcium-dependent, calmodulin-stimulated protein phosphatase. The chain is Calcineurin subunit B type 1 (CanB) from Drosophila melanogaster (Fruit fly).